We begin with the raw amino-acid sequence, 165 residues long: SPbeta prophage-derived uncharacterized protein YorR (165 aa).

The sequence is that of SPbeta prophage-derived uncharacterized protein YorR (yorR) from Bacillus subtilis (strain 168).